A 476-amino-acid polypeptide reads, in one-letter code: Glycogen synthase (476 aa).

Residue Lys15 coordinates ADP-alpha-D-glucose.

It belongs to the glycosyltransferase 1 family. Bacterial/plant glycogen synthase subfamily.

The enzyme catalyses [(1-&gt;4)-alpha-D-glucosyl](n) + ADP-alpha-D-glucose = [(1-&gt;4)-alpha-D-glucosyl](n+1) + ADP + H(+). It participates in glycan biosynthesis; glycogen biosynthesis. Functionally, synthesizes alpha-1,4-glucan chains using ADP-glucose. The polypeptide is Glycogen synthase (Bacillus cereus (strain ATCC 10987 / NRS 248)).